A 198-amino-acid polypeptide reads, in one-letter code: MTTILQINSAARSQGAQSTMLADELTAKLQQGNPGATVKVRSLLADALPHLDDAVLGAFFTPAEQRSAEQNAIVAKSDALIDELRSADVIVIGAPMYNFGVSSQLKTYFDWIARAGVTFRYTAQGPEGLLKGKKVYVVSARGGKHVGMPTDSQTPFLTTFLGFIGMTDVTFVYAEGLALGPDAASEALASAREAIAAV.

96–99 (MYNF) provides a ligand contact to FMN.

It belongs to the azoreductase type 1 family. As to quaternary structure, homodimer. The cofactor is FMN.

The catalysed reaction is 2 a quinone + NADH + H(+) = 2 a 1,4-benzosemiquinone + NAD(+). It catalyses the reaction N,N-dimethyl-1,4-phenylenediamine + anthranilate + 2 NAD(+) = 2-(4-dimethylaminophenyl)diazenylbenzoate + 2 NADH + 2 H(+). In terms of biological role, quinone reductase that provides resistance to thiol-specific stress caused by electrophilic quinones. Also exhibits azoreductase activity. Catalyzes the reductive cleavage of the azo bond in aromatic azo compounds to the corresponding amines. This chain is FMN-dependent NADH:quinone oxidoreductase, found in Burkholderia thailandensis (strain ATCC 700388 / DSM 13276 / CCUG 48851 / CIP 106301 / E264).